Consider the following 72-residue polypeptide: Translation initiation factor IF-1 (72 aa).

One can recognise an S1-like domain in the interval 1-72; it reads MAKSDVIEVE…SKGRITYRFK (72 aa).

The protein belongs to the IF-1 family. Component of the 30S ribosomal translation pre-initiation complex which assembles on the 30S ribosome in the order IF-2 and IF-3, IF-1 and N-formylmethionyl-tRNA(fMet); mRNA recruitment can occur at any time during PIC assembly.

The protein resides in the cytoplasm. Its function is as follows. One of the essential components for the initiation of protein synthesis. Stabilizes the binding of IF-2 and IF-3 on the 30S subunit to which N-formylmethionyl-tRNA(fMet) subsequently binds. Helps modulate mRNA selection, yielding the 30S pre-initiation complex (PIC). Upon addition of the 50S ribosomal subunit IF-1, IF-2 and IF-3 are released leaving the mature 70S translation initiation complex. This Levilactobacillus brevis (strain ATCC 367 / BCRC 12310 / CIP 105137 / JCM 1170 / LMG 11437 / NCIMB 947 / NCTC 947) (Lactobacillus brevis) protein is Translation initiation factor IF-1.